A 32-amino-acid chain; its full sequence is Alpha-amylase inhibitor AAI (32 aa).

Intrachain disulfides connect Cys1–Cys18, Cys8–Cys23, and Cys17–Cys31.

As to expression, endosperm.

Functionally, alpha-amylase inhibitor. It is active against alpha-amylases from Tribolium castaneum and Prostephanus truncatus larvae. This Amaranthus hypochondriacus (Prince-of-Wales feather) protein is Alpha-amylase inhibitor AAI (AAI).